The primary structure comprises 208 residues: Large ribosomal subunit protein bL25 (208 aa).

Belongs to the bacterial ribosomal protein bL25 family. CTC subfamily. Part of the 50S ribosomal subunit; part of the 5S rRNA/L5/L18/L25 subcomplex. Contacts the 5S rRNA. Binds to the 5S rRNA independently of L5 and L18.

This is one of the proteins that binds to the 5S RNA in the ribosome where it forms part of the central protuberance. The polypeptide is Large ribosomal subunit protein bL25 (Bartonella quintana (strain Toulouse) (Rochalimaea quintana)).